We begin with the raw amino-acid sequence, 225 residues long: Uracil-DNA glycosylase (225 aa).

Residue D68 is the Proton acceptor of the active site.

Belongs to the uracil-DNA glycosylase (UDG) superfamily. UNG family.

The protein localises to the cytoplasm. The enzyme catalyses Hydrolyzes single-stranded DNA or mismatched double-stranded DNA and polynucleotides, releasing free uracil.. Its function is as follows. Excises uracil residues from the DNA which can arise as a result of misincorporation of dUMP residues by DNA polymerase or due to deamination of cytosine. The protein is Uracil-DNA glycosylase of Mycolicibacterium vanbaalenii (strain DSM 7251 / JCM 13017 / BCRC 16820 / KCTC 9966 / NRRL B-24157 / PYR-1) (Mycobacterium vanbaalenii).